A 229-amino-acid chain; its full sequence is Flagellar L-ring protein (229 aa).

A signal peptide spans 1-25 (MKQVRLLPSAAVRAACALAAAALAG). C26 is lipidated: N-palmitoyl cysteine. A lipid anchor (S-diacylglycerol cysteine) is attached at C26.

Belongs to the FlgH family. The basal body constitutes a major portion of the flagellar organelle and consists of four rings (L,P,S, and M) mounted on a central rod.

The protein resides in the cell outer membrane. The protein localises to the bacterial flagellum basal body. Its function is as follows. Assembles around the rod to form the L-ring and probably protects the motor/basal body from shearing forces during rotation. The polypeptide is Flagellar L-ring protein (Burkholderia multivorans (strain ATCC 17616 / 249)).